A 286-amino-acid polypeptide reads, in one-letter code: Shikimate dehydrogenase (NADP(+)) (286 aa).

Residues 22 to 24 and threonine 71 each bind shikimate; that span reads SRS. Lysine 75 (proton acceptor) is an active-site residue. Glutamate 87 contributes to the NADP(+) binding site. 2 residues coordinate shikimate: asparagine 96 and aspartate 111. NADP(+) is bound by residues 136–140, 160–165, and isoleucine 225; these read GAGGA and NRTVER. Tyrosine 227 provides a ligand contact to shikimate. Glycine 248 provides a ligand contact to NADP(+).

It belongs to the shikimate dehydrogenase family. As to quaternary structure, homodimer.

It carries out the reaction shikimate + NADP(+) = 3-dehydroshikimate + NADPH + H(+). Its pathway is metabolic intermediate biosynthesis; chorismate biosynthesis; chorismate from D-erythrose 4-phosphate and phosphoenolpyruvate: step 4/7. In terms of biological role, involved in the biosynthesis of the chorismate, which leads to the biosynthesis of aromatic amino acids. Catalyzes the reversible NADPH linked reduction of 3-dehydroshikimate (DHSA) to yield shikimate (SA). The chain is Shikimate dehydrogenase (NADP(+)) from Rhizobium rhizogenes (strain K84 / ATCC BAA-868) (Agrobacterium radiobacter).